Here is a 524-residue protein sequence, read N- to C-terminus: Thermosome subunit 3 (524 aa).

This sequence belongs to the TCP-1 chaperonin family. The thermosome or CCT complex is a oligomeric complex of two octameric double-ring structures; the complex is probably a heterooligomer of CCT1, CCT2 and CCT3 with yet unknown stoichiometry.

Molecular chaperone that assists in the folding or refolding of nascent or denatured proteins along with ATP hydrolysis. ATPase activity is highest in thermosome assemblies containing CCT1:CCT2, followed by assemblies containing CCT1:CCT2:CCT3. Not required for thermosome ATPase activity. Not required for growth. The sequence is that of Thermosome subunit 3 (cct3) from Haloferax volcanii (strain ATCC 29605 / DSM 3757 / JCM 8879 / NBRC 14742 / NCIMB 2012 / VKM B-1768 / DS2) (Halobacterium volcanii).